The primary structure comprises 137 residues: Proofreading thioesterase EntH (137 aa).

The active-site Nucleophile or proton acceptor is glutamate 63.

It belongs to the thioesterase PaaI family. In terms of assembly, homotetramer. Dimer of dimers. Interacts specifically with the aryl carrier protein (ArCP) domain of EntB.

The protein resides in the cytoplasm. Its pathway is siderophore biosynthesis; enterobactin biosynthesis. Functionally, required for optimal enterobactin synthesis. Acts as a proofreading enzyme that prevents EntB misacylation by hydrolyzing the thioester bound existing between EntB and wrongly charged molecules. In Klebsiella pneumoniae subsp. pneumoniae (strain ATCC 700721 / MGH 78578), this protein is Proofreading thioesterase EntH (entH).